Consider the following 76-residue polypeptide: DNA-directed RNA polymerase subunit epsilon (76 aa).

Belongs to the RNA polymerase subunit epsilon family. In terms of assembly, RNAP is composed of a core of 2 alpha, a beta and a beta' subunit. The core is associated with a delta subunit, and at least one of epsilon or omega. When a sigma factor is associated with the core the holoenzyme is formed, which can initiate transcription.

The enzyme catalyses RNA(n) + a ribonucleoside 5'-triphosphate = RNA(n+1) + diphosphate. Its function is as follows. A non-essential component of RNA polymerase (RNAP). The sequence is that of DNA-directed RNA polymerase subunit epsilon from Streptococcus thermophilus (strain CNRZ 1066).